Consider the following 334-residue polypeptide: Trans-3-hydroxy-L-proline dehydratase (334 aa).

The active-site Proton acceptor is the Cys-91. Residues 92–93, Asp-250, and 255–256 each bind substrate; these read GH and GT.

The protein belongs to the proline racemase family.

The catalysed reaction is trans-3-hydroxy-L-proline = 1-pyrroline-2-carboxylate + H2O. Functionally, catalyzes the dehydration of trans-3-hydroxy-L-proline (t3LHyp) to Delta(1)-pyrroline-2-carboxylate (Pyr2C). Is likely involved in a degradation pathway that converts t3LHyp to L-proline, which allows B.cereus to grow on t3LHyp as a sole carbon source. Displays no proline racemase activity. This chain is Trans-3-hydroxy-L-proline dehydratase, found in Bacillus cereus (strain ATCC 14579 / DSM 31 / CCUG 7414 / JCM 2152 / NBRC 15305 / NCIMB 9373 / NCTC 2599 / NRRL B-3711).